The sequence spans 574 residues: MIDRSILNNIPKKPGVYIFKNNKGDPIYIGKAKNLKNRVSSYFNKKNYIGNEKTYEMLEKATNLDYIITSNENQAFILEANLIYIHKPKYNIMLKDTRVYPYILVTDEQFPKIKYIRTKKEEKGKFYGPYSDVKFVKDVIEVLQSVYKIRSCDRDLGRKSKPCFLYHLGRCYGPCYKDVDETVYQESVEKVKKVLSGDIEEVKNYLQKAMMDYAKIKNYEKAAQMRDTLFKLENLFEEVAVEYKNGKNLDIIMYEPPVYLVLIVRKGYLISKLSFTMEGTLEDFLYQYYIVRKNEPPSLISTLYNEEISPEILDFLKEKGLKRIEKIGKSSKIYEMAYTNLQEEIKRQKDLSFALKQAKEILSLKKEPKIIEGIDISHLQGLYTVASLVRFENGKPKKEGYRKYRLDDIKAPDDFESIRTVIKRRYQKHELPDLLFIDGGKGQVNSAVEALKEIGYSLKDVDVVGIAKEDERIVFPGDIPDLHLPLDHPVLRLLIYVRDETHRFAIGFNRSLRSKRFEKTKLDDIYGIGPKRKKELIKHFGGIQKLLEASIEEISKVVKSEKIAKRIKESLGEK.

The GIY-YIG domain maps to 12–92 (KKPGVYIFKN…IYIHKPKYNI (81 aa)). Residues 200–235 (EEVKNYLQKAMMDYAKIKNYEKAAQMRDTLFKLENL) form the UVR domain.

Belongs to the UvrC family. In terms of assembly, interacts with UvrB in an incision complex.

The protein resides in the cytoplasm. Its function is as follows. The UvrABC repair system catalyzes the recognition and processing of DNA lesions. UvrC both incises the 5' and 3' sides of the lesion. The N-terminal half is responsible for the 3' incision and the C-terminal half is responsible for the 5' incision. The polypeptide is UvrABC system protein C (Petrotoga mobilis (strain DSM 10674 / SJ95)).